The sequence spans 207 residues: Suppressor of IKBKE 1 (207 aa).

2 coiled-coil regions span residues 4 to 32 and 154 to 193; these read TIDKILQDAKTLLERLKDHDNAAESLIDQ and DAIQLDEDKAYNIQEKLAQLELENKELREILSTSKESLHS. Positions 186 to 207 are disordered; sequence TSKESLHSSKRESEWNFSEKTQ. Residues 189–199 are compositionally biased toward basic and acidic residues; the sequence is ESLHSSKRESE.

The protein belongs to the SIKE family. As to quaternary structure, interacts with IKBKE and TBK1 via its coiled coil region. Interaction with TBK1 is disrupted upon viral infection or TLR3 stimulation. Interacts with CDC42BPB. Associates with the STRIPAK core complex composed of PP2A catalytic and scaffolding subunits, the striatins (PP2A regulatory subunits), the striatin-associated proteins MOB4, STRIP1 and STRIP2, PDCD10 and members of the STE20 kinases, such as STK24 and STK26.

In terms of biological role, suppressor of IKK-epsilon. Associates with the striatin-interacting phosphatase and kinase (STRIPAK) core complex, forming the extended (SIKE1:SLMAP)STRIPAK complex. The (SIKE1:SLMAP)STRIPAK complex dephosphorylates STK3 leading to the inhibition of Hippo signaling and the control of cell growth. This Xenopus tropicalis (Western clawed frog) protein is Suppressor of IKBKE 1 (sike1).